The chain runs to 572 residues: Oxygen-dependent choline dehydrogenase (572 aa).

7 to 36 (DYIIIGAGSAGNVLATRLTEDRDVTVLLLE) provides a ligand contact to FAD. Histidine 474 serves as the catalytic Proton acceptor.

It belongs to the GMC oxidoreductase family. It depends on FAD as a cofactor.

The enzyme catalyses choline + A = betaine aldehyde + AH2. It catalyses the reaction betaine aldehyde + NAD(+) + H2O = glycine betaine + NADH + 2 H(+). The protein operates within amine and polyamine biosynthesis; betaine biosynthesis via choline pathway; betaine aldehyde from choline (cytochrome c reductase route): step 1/1. Its function is as follows. Involved in the biosynthesis of the osmoprotectant glycine betaine. Catalyzes the oxidation of choline to betaine aldehyde and betaine aldehyde to glycine betaine at the same rate. The chain is Oxygen-dependent choline dehydrogenase from Paraburkholderia phymatum (strain DSM 17167 / CIP 108236 / LMG 21445 / STM815) (Burkholderia phymatum).